The following is a 77-amino-acid chain: MSTVEERVKKIVCEQLGVKESEVQNTSSFVEDLGADSLDTVELVMALEEEFETEIPDEEAEKLGTVQDAIDYIVAHT.

A Carrier domain is found at 2–77; the sequence is STVEERVKKI…DAIDYIVAHT (76 aa). S37 bears the O-(pantetheine 4'-phosphoryl)serine mark.

This sequence belongs to the acyl carrier protein (ACP) family. Post-translationally, 4'-phosphopantetheine is transferred from CoA to a specific serine of apo-ACP by AcpS. This modification is essential for activity because fatty acids are bound in thioester linkage to the sulfhydryl of the prosthetic group.

It is found in the cytoplasm. Its pathway is lipid metabolism; fatty acid biosynthesis. Carrier of the growing fatty acid chain in fatty acid biosynthesis. In Marinobacter nauticus (strain ATCC 700491 / DSM 11845 / VT8) (Marinobacter aquaeolei), this protein is Acyl carrier protein.